Here is a 398-residue protein sequence, read N- to C-terminus: Regulatory protein E2 (398 aa).

Residues 1-205 (MESLNNRLDW…TNVMSPVNSS (205 aa)) are transactivation domain. The span at 197-228 (NVMSPVNSSPLRTSGSPTDTNPATQGQSTQTA) shows a compositional bias: polar residues. Positions 197–304 (NVMSPVNSSP…RSPPKGGQSR (108 aa)) are disordered. The span at 236–257 (SRHHPKSPAVRKRRPYGRRRSR) shows a compositional bias: basic residues. Residues 258 to 271 (SPRDTTLRRGEGES) are compositionally biased toward basic and acidic residues. Positions 314–398 (DPPIICLKGG…SVILGAFDGS (85 aa)) are DNA-binding domain. A Glycyl lysine isopeptide (Lys-Gly) (interchain with G-Cter in SUMO) cross-link involves residue Lys-321.

The protein belongs to the papillomaviridae E2 protein family. Binds DNA as homodimer. Interacts with protein E1; this interaction greatly increases E1 DNA-binding activity. Interacts with protein L1; this interaction enhances E2-dependent replication and transcription activation. Interacts with protein L2; this interaction inhibits E2 transcriptional activity but not DNA replication function E2. Interacts with protein E7; this interaction inhibits E7 oncogenic activity. Interacts with host TAF1; this interaction modulates E2-dependent transcriptional regulation. Interacts with host BRD4; this interaction mediates E2 transcriptional activation function. Additionally, the interaction with host BRD4 on mitotic chromosomes mediates tethering of the viral genome. Interacts with host TOPBP1; this interaction is required for optimal viral DNA replication. In terms of processing, phosphorylated. Sumoylation plays a regulatory role in E2 transcriptional activity.

The protein resides in the host nucleus. In terms of biological role, plays a role in the initiation of viral DNA replication. A dimer of E2 interacts with a dimer of E1 in order to improve specificity of E1 DNA binding activity. Once the complex recognizes and binds DNA at specific sites, the E2 dimer is removed from DNA. E2 also regulates viral transcription through binding to the E2RE response element (5'-ACCNNNNNNGGT-3') present in multiple copies in the regulatory regions of the viral genome. Activates or represses transcription depending on E2RE's position with regards to proximal promoter elements including the TATA-box. Repression occurs by sterically hindering the assembly of the transcription initiation complex. This chain is Regulatory protein E2, found in Human papillomavirus type 63.